The sequence spans 294 residues: Ribosomal protein L11 methyltransferase (294 aa).

S-adenosyl-L-methionine is bound by residues Thr-145, Gly-167, Asp-189, and Asn-230.

It belongs to the methyltransferase superfamily. PrmA family.

It is found in the cytoplasm. It carries out the reaction L-lysyl-[protein] + 3 S-adenosyl-L-methionine = N(6),N(6),N(6)-trimethyl-L-lysyl-[protein] + 3 S-adenosyl-L-homocysteine + 3 H(+). Its function is as follows. Methylates ribosomal protein L11. The protein is Ribosomal protein L11 methyltransferase of Alkalilimnicola ehrlichii (strain ATCC BAA-1101 / DSM 17681 / MLHE-1).